Here is a 588-residue protein sequence, read N- to C-terminus: Adenine deaminase (588 aa).

Belongs to the metallo-dependent hydrolases superfamily. Adenine deaminase family. As to quaternary structure, homodimer. Requires Mn(2+) as cofactor.

It carries out the reaction adenine + H2O + H(+) = hypoxanthine + NH4(+). This chain is Adenine deaminase, found in Escherichia coli O139:H28 (strain E24377A / ETEC).